Reading from the N-terminus, the 420-residue chain is Methanogen homoaconitase large subunit (420 aa).

[4Fe-4S] cluster-binding residues include Cys302, Cys362, and Cys365.

It belongs to the aconitase/IPM isomerase family. LeuC type 2 subfamily. In terms of assembly, heterotetramer of 2 HacA and 2 HacB proteins. [4Fe-4S] cluster serves as cofactor.

It carries out the reaction (2R)-homocitrate = (2R,3S)-homoisocitrate. The catalysed reaction is (2R)-homocitrate = cis-homoaconitate + H2O. The enzyme catalyses (2R,3S)-homoisocitrate = cis-homoaconitate + H2O. It catalyses the reaction cis-(homo)2aconitate + H2O = (2R,3S)-iso(homo)2citrate. It carries out the reaction cis-(homo)3aconitate + H2O = (2R,3S)-iso(homo)3citrate. The catalysed reaction is (R)-malate = maleate + H2O. The enzyme catalyses cis-aconitate + H2O = D-threo-isocitrate. It functions in the pathway organic acid metabolism; 2-oxosuberate biosynthesis. In terms of biological role, component of a hydro-lyase with broad substrate specificity for cis-unsaturated tricarboxylic acids. Catalyzes both the reversible dehydration of (R)-homocitrate ((R)-2-hydroxybutane-1,2,4-tricarboxylate) to produce cis-homoaconitate ((Z)-but-1-ene-1,2,4-tricarboxylate), and its hydration to homoisocitrate ((1R,2S)-1-hydroxybutane-1,2,4-tricarboxylate). Is also able to hydrate the analogous longer chain substrates cis-homo(2)-aconitate, cis-homo(3)-aconitate, and even the non-physiological cis-homo(4)-aconitate with similar efficiency. These reactions are part of the biosynthesis pathway of coenzyme B. Can also catalyze the hydration of maleate to (R)-malate, and that of cis-aconitate. Cannot catalyze the hydration of citraconate and the dehydration of (S)-homocitrate, citramalate, 2-isopropylmalate, 3-isopropylmalate, citrate or threo-DL-isocitrate. In Methanocaldococcus jannaschii (strain ATCC 43067 / DSM 2661 / JAL-1 / JCM 10045 / NBRC 100440) (Methanococcus jannaschii), this protein is Methanogen homoaconitase large subunit (hacA).